The chain runs to 184 residues: ATP synthase subunit b, chloroplastic (184 aa).

A helical membrane pass occupies residues 27–49 (LATNPINLSVVLGVLIFFGKGVL).

It belongs to the ATPase B chain family. As to quaternary structure, F-type ATPases have 2 components, F(1) - the catalytic core - and F(0) - the membrane proton channel. F(1) has five subunits: alpha(3), beta(3), gamma(1), delta(1), epsilon(1). F(0) has four main subunits: a(1), b(1), b'(1) and c(10-14). The alpha and beta chains form an alternating ring which encloses part of the gamma chain. F(1) is attached to F(0) by a central stalk formed by the gamma and epsilon chains, while a peripheral stalk is formed by the delta, b and b' chains.

It is found in the plastid. The protein resides in the chloroplast thylakoid membrane. Functionally, f(1)F(0) ATP synthase produces ATP from ADP in the presence of a proton or sodium gradient. F-type ATPases consist of two structural domains, F(1) containing the extramembraneous catalytic core and F(0) containing the membrane proton channel, linked together by a central stalk and a peripheral stalk. During catalysis, ATP synthesis in the catalytic domain of F(1) is coupled via a rotary mechanism of the central stalk subunits to proton translocation. Its function is as follows. Component of the F(0) channel, it forms part of the peripheral stalk, linking F(1) to F(0). The chain is ATP synthase subunit b, chloroplastic from Nicotiana tomentosiformis (Tobacco).